Here is a 251-residue protein sequence, read N- to C-terminus: Low molecular mass lipoprotein PBMHPC-21 (251 aa).

Positions 1–16 are cleaved as a signal peptide; it reads MKFVVVFASCVLAVSA.

This sequence belongs to the 30 kDa lipoprotein family.

The protein localises to the secreted. In Bombyx mori (Silk moth), this protein is Low molecular mass lipoprotein PBMHPC-21.